Reading from the N-terminus, the 371-residue chain is Queuine tRNA-ribosyltransferase (371 aa).

Residue Asp90 is the Nucleophile of the active site. Asp90 (proton acceptor) is an active-site residue. Residues 90–94 (DSGGF), Ser91, Asp144, Gln189, and Gly215 each bind substrate. The RNA binding stretch occupies residues 246 to 252 (GVGTPEN). Catalysis depends on Asp265, which acts as the Nucleophile. The RNA binding; important for wobble base 34 recognition stretch occupies residues 270-274 (TRNAR). Residues Cys303, Cys305, Cys308, and His334 each contribute to the Zn(2+) site.

This sequence belongs to the queuine tRNA-ribosyltransferase family. As to quaternary structure, homodimer. Within each dimer, one monomer is responsible for RNA recognition and catalysis, while the other monomer binds to the replacement base PreQ1. It depends on Zn(2+) as a cofactor.

It carries out the reaction 7-aminomethyl-7-carbaguanine + guanosine(34) in tRNA = 7-aminomethyl-7-carbaguanosine(34) in tRNA + guanine. Its pathway is tRNA modification; tRNA-queuosine biosynthesis. In terms of biological role, catalyzes the base-exchange of a guanine (G) residue with the queuine precursor 7-aminomethyl-7-deazaguanine (PreQ1) at position 34 (anticodon wobble position) in tRNAs with GU(N) anticodons (tRNA-Asp, -Asn, -His and -Tyr). Catalysis occurs through a double-displacement mechanism. The nucleophile active site attacks the C1' of nucleotide 34 to detach the guanine base from the RNA, forming a covalent enzyme-RNA intermediate. The proton acceptor active site deprotonates the incoming PreQ1, allowing a nucleophilic attack on the C1' of the ribose to form the product. After dissociation, two additional enzymatic reactions on the tRNA convert PreQ1 to queuine (Q), resulting in the hypermodified nucleoside queuosine (7-(((4,5-cis-dihydroxy-2-cyclopenten-1-yl)amino)methyl)-7-deazaguanosine). In Helicobacter pylori (strain ATCC 700392 / 26695) (Campylobacter pylori), this protein is Queuine tRNA-ribosyltransferase.